A 454-amino-acid chain; its full sequence is L-cysteine desulfhydrase (454 aa).

Residues 1 to 25 form a disordered region; sequence MEAGERRNGDSMSHNHRAPKKPRLA. A compositionally biased stretch (basic residues) spans 14–23; it reads HNHRAPKKPR. Lys-257 carries the N6-(pyridoxal phosphate)lysine modification.

It belongs to the class-V pyridoxal-phosphate-dependent aminotransferase family. It depends on pyridoxal 5'-phosphate as a cofactor. In terms of tissue distribution, highly expressed in stems and cauline leaves, and at lower levels in roots, rosette leaves and flowers.

The enzyme catalyses L-cysteine + H2O = hydrogen sulfide + pyruvate + NH4(+) + H(+). Its function is as follows. Catalyzes the production of hydrogen sulfide (H2S) from cysteine. Is mainly responsible for the degradation of cysteine to generate H2S, a regulator of stomatal movement and closure. The sequence is that of L-cysteine desulfhydrase (LCD) from Arabidopsis thaliana (Mouse-ear cress).